The following is a 411-amino-acid chain: MVAFWTCRNAWFQHLPFAKRGDENAPSGPRRLRPWFLVLALGLAACSEDKSAPQQAAPLPPIPVGVIKITERPTHPQLSFVGRVEATDSVDLIARVDGFLDKRTFTEGQAVKTGDLLFVLQKDALQAALDAAQANLAKAQADADNLKLQTERARSLYKQKTVSQAMLDDRVAAEKQALAVVQQAQASLEQAQINLGYTDIRAPFSGRIGMANFSVGALVGPSSGPLATIVSQDPIYVTFPVSDKTILDLTEGGRTATDRSNVAVSLTLSNGMTYPQTGAIDFTGIKINPNTDTLMVRAQFPNPNNVLIDGQYVQVTAASKHPVEALLVPQKAIMTDQSGNYVLAVGEDNKVIQRQITQGSTFGSNVVVKSGLAVGDQVVVDGLQRIRPGQKVDPQIVDATTPAQKAMSVGN.

Positions 118–196 form a coiled coil; it reads FVLQKDALQA…SLEQAQINLG (79 aa).

The protein belongs to the membrane fusion protein (MFP) (TC 8.A.1) family. In terms of assembly, probably part of a tripartite efflux pump, which is composed of an outer membrane efflux protein, an inner membrane protein and a protein that expands the periplasmic space. Could form a tripartite pump with BepC and BepG.

The protein localises to the periplasm. May contribute to resistance to some drugs, such as deoxycholate, sodium dodecyl sulfate and nalidixic acid, in the absence of BepD and BepE. This is Efflux pump periplasmic linker BepF (bepF) from Brucella suis biovar 1 (strain 1330).